A 378-amino-acid chain; its full sequence is TelA-like protein SAB1262 (378 aa).

Belongs to the TelA family.

The chain is TelA-like protein SAB1262 from Staphylococcus aureus (strain bovine RF122 / ET3-1).